Consider the following 215-residue polypeptide: Probable Rab-related GTPase (215 aa).

A GTP-binding site is contributed by 20-27; sequence GSSGVGKS. An Effector region motif is present at residues 42–50; sequence VSPTIGAAF. Residues 69–73 and 127–130 each bind GTP; these read DTAGQ and NKID. S-geranylgeranyl cysteine; by host attachment occurs at residues C211 and C212. The residue at position 212 (C212) is a Cysteine methyl ester; by host. The propeptide at 213 to 215 is removed in mature form; sequence YIS.

The protein belongs to the small GTPase superfamily. Rab family.

Its subcellular location is the host cell membrane. In terms of biological role, may be involved in protein transport. The chain is Probable Rab-related GTPase from Acanthamoeba polyphaga mimivirus (APMV).